A 424-amino-acid polypeptide reads, in one-letter code: Hydrolase ORFZ (424 aa).

The active-site Nucleophile is the serine 243.

This sequence belongs to the AB hydrolase superfamily. FUS2 hydrolase family. In terms of assembly, homodimer.

It functions in the pathway secondary metabolite biosynthesis. Hydrolyase; part of the gene cluster that mediates the biosynthesis of a tyrosine-derived cytochalasan acting as a fungal signal recognized by resistant rice plants and leads to avirulence in Pi33 resistant rice cultivars. The first step in the pathway is catalyzed by the hybrid PKS-NRPS ACE1, assisted by the enoyl reductase RAP1, that are responsible for fusion of the tyrosine precursor and the polyketide backbone. The polyketide synthase module (PKS) of ACE1 is responsible for the synthesis of the polyketide backbone and the downstream nonribosomal peptide synthetase (NRPS) amidates the carboxyl end of the polyketide with the tyrosine precursor. Because ACE1 lacks a designated enoylreductase (ER) domain, the required activity is provided the enoyl reductase RAP1. Reduction by the hydrolyase ORFZ, followed by dehydration and intra-molecular Diels-Alder cyclization by the Diels-Alderase ORF3 then yield the required isoindolone-fused macrocycle. A number of oxidative steps catalyzed by the tailoring enzymes identified within the cluster, including cytochrome P450 monooxygenases CYP1 to CYP4, the FAD-linked oxidoreductase OXR2 and the short-chain dehydrogenase/reductase OXR1, are further required to afford the final cytochalasans that confer avirulence and which have still to be identified. The monooxygenase CYP1 has been shown to be a site-selective C-18 hydroxylase whereas the function of CYP3 is the site-selective epoxidation of the C-6/C-7 olefin that is present in some intermediate compounds. Finally, SYN2 and RAP2 are not required for avirulence in Pi33 resistant rice cultivars. The chain is Hydrolase ORFZ from Pyricularia oryzae (strain 70-15 / ATCC MYA-4617 / FGSC 8958) (Rice blast fungus).